A 150-amino-acid polypeptide reads, in one-letter code: Troponin C, isotype gamma (150 aa).

The residue at position 1 (M1) is an N-acetylmethionine. EF-hand domains follow at residues 7-42 (EQLS…MGVK), 43-78 (ISEK…FLIE), 83-118 (ALKA…LDNR), and 119-150 (LTED…MMSG). The Ca(2+) site is built by D56, D58, S60, E62, and E67. Ca(2+)-binding residues include D132, D134, S136, T138, and E143.

It belongs to the troponin C family.

Troponin is the central regulatory protein of striated muscle contraction. Tn consists of three components: Tn-I which is the inhibitor of actomyosin ATPase, Tn-T which contains the binding site for tropomyosin and Tn-C. The binding of calcium to Tn-C abolishes the inhibitory action of Tn on actin filaments. The protein is Troponin C, isotype gamma of Astacus leptodactylus (Turkish narrow-clawed crayfish).